The following is a 230-amino-acid chain: 2-C-methyl-D-erythritol 4-phosphate cytidylyltransferase (230 aa).

This sequence belongs to the IspD/TarI cytidylyltransferase family. IspD subfamily.

It carries out the reaction 2-C-methyl-D-erythritol 4-phosphate + CTP + H(+) = 4-CDP-2-C-methyl-D-erythritol + diphosphate. Its pathway is isoprenoid biosynthesis; isopentenyl diphosphate biosynthesis via DXP pathway; isopentenyl diphosphate from 1-deoxy-D-xylulose 5-phosphate: step 2/6. Functionally, catalyzes the formation of 4-diphosphocytidyl-2-C-methyl-D-erythritol from CTP and 2-C-methyl-D-erythritol 4-phosphate (MEP). In Laribacter hongkongensis (strain HLHK9), this protein is 2-C-methyl-D-erythritol 4-phosphate cytidylyltransferase.